The primary structure comprises 329 residues: Thioredoxin domain-containing protein 6 (329 aa).

Residues Gln11–Ala115 form the Thioredoxin domain. Residues Gly157 to Lys303 are NDK. The segment at Lys303 to Ile329 is disordered.

The protein belongs to the NDK family. In terms of assembly, monomer and homodimer. As to expression, expressed in lung airway epithelium (at protein level).

The protein resides in the cytoplasm. It localises to the cytoskeleton. The protein localises to the cilium axoneme. Its subcellular location is the dynein axonemal particle. In terms of biological role, may be a regulator of microtubule physiology. The chain is Thioredoxin domain-containing protein 6 from Mus musculus (Mouse).